The chain runs to 535 residues: Light-independent protochlorophyllide reductase subunit B (535 aa).

Position 36 (Asp-36) interacts with [4Fe-4S] cluster. Asp-287 (proton donor) is an active-site residue. Residue 422–423 (GL) coordinates substrate.

This sequence belongs to the ChlB/BchB/BchZ family. As to quaternary structure, protochlorophyllide reductase is composed of three subunits; BchL, BchN and BchB. Forms a heterotetramer of two BchB and two BchN subunits. Requires [4Fe-4S] cluster as cofactor.

It catalyses the reaction chlorophyllide a + oxidized 2[4Fe-4S]-[ferredoxin] + 2 ADP + 2 phosphate = protochlorophyllide a + reduced 2[4Fe-4S]-[ferredoxin] + 2 ATP + 2 H2O. Its pathway is porphyrin-containing compound metabolism; bacteriochlorophyll biosynthesis (light-independent). Functionally, component of the dark-operative protochlorophyllide reductase (DPOR) that uses Mg-ATP and reduced ferredoxin to reduce ring D of protochlorophyllide (Pchlide) to form chlorophyllide a (Chlide). This reaction is light-independent. The NB-protein (BchN-BchB) is the catalytic component of the complex. In Rhodopseudomonas palustris (strain BisB5), this protein is Light-independent protochlorophyllide reductase subunit B.